Reading from the N-terminus, the 376-residue chain is Dihydroorotate dehydrogenase (quinone) (376 aa).

FMN contacts are provided by residues 78–82 (AGFDK) and threonine 102. A substrate-binding site is contributed by lysine 82. 127 to 131 (NRMGF) serves as a coordination point for substrate. The FMN site is built by asparagine 157 and asparagine 190. Residue asparagine 190 coordinates substrate. The Nucleophile role is filled by serine 193. Asparagine 195 is a substrate binding site. The FMN site is built by lysine 228 and threonine 256. 257 to 258 (NT) is a substrate binding site. FMN-binding positions include glycine 286, glycine 315, and 336-337 (YT).

This sequence belongs to the dihydroorotate dehydrogenase family. Type 2 subfamily. Monomer. The cofactor is FMN.

The protein localises to the cell membrane. The catalysed reaction is (S)-dihydroorotate + a quinone = orotate + a quinol. It participates in pyrimidine metabolism; UMP biosynthesis via de novo pathway; orotate from (S)-dihydroorotate (quinone route): step 1/1. Its function is as follows. Catalyzes the conversion of dihydroorotate to orotate with quinone as electron acceptor. The protein is Dihydroorotate dehydrogenase (quinone) of Nostoc sp. (strain PCC 7120 / SAG 25.82 / UTEX 2576).